The primary structure comprises 231 residues: Superoxide dismutase [Mn] 1, mitochondrial (231 aa).

The N-terminal 29 residues, M1 to Q29, are a transit peptide targeting the mitochondrion. The Mn(2+) site is built by H55 and H103. A Phosphoserine modification is found at S124. The Mn(2+) site is built by D192 and H196.

This sequence belongs to the iron/manganese superoxide dismutase family. As to quaternary structure, homotetramer. Mn(2+) serves as cofactor.

Its subcellular location is the mitochondrion matrix. The enzyme catalyses 2 superoxide + 2 H(+) = H2O2 + O2. Activated by MTM1. Its function is as follows. Destroys superoxide anion radicals which are normally produced within the cells and which are toxic to biological systems. The protein is Superoxide dismutase [Mn] 1, mitochondrial (MSD1) of Arabidopsis thaliana (Mouse-ear cress).